The following is a 1201-amino-acid chain: DNA-directed RNA polymerase subunit beta (1201 aa).

A disordered region spans residues 1165–1201 (DALSKFKQQQDEKAADKAAKADAAKPSETTNAQQDNQ). The span at 1172-1189 (QQQDEKAADKAAKADAAK) shows a compositional bias: basic and acidic residues. A compositionally biased stretch (polar residues) spans 1191–1201 (SETTNAQQDNQ).

It belongs to the RNA polymerase beta chain family. As to quaternary structure, the RNAP catalytic core consists of 2 alpha, 1 beta, 1 beta' and 1 omega subunit. When a sigma factor is associated with the core the holoenzyme is formed, which can initiate transcription.

The catalysed reaction is RNA(n) + a ribonucleoside 5'-triphosphate = RNA(n+1) + diphosphate. Functionally, DNA-dependent RNA polymerase catalyzes the transcription of DNA into RNA using the four ribonucleoside triphosphates as substrates. This chain is DNA-directed RNA polymerase subunit beta, found in Lactiplantibacillus plantarum (strain ATCC BAA-793 / NCIMB 8826 / WCFS1) (Lactobacillus plantarum).